Here is a 1666-residue protein sequence, read N- to C-terminus: Atrochrysone carboxylic acid synthase PKS4 (1666 aa).

The Ketosynthase family 3 (KS3) domain occupies 15 to 452 (FEPIAIVGIG…GNAGFMVIEE (438 aa)). Catalysis depends on for beta-ketoacyl synthase activity residues Cys194, His332, and His372. A malonyl-CoA:ACP transacylase (MAT) domain region spans residues 555–863 (AFCFSGQGGE…WMTALDALMR (309 aa)). Ser632 (for acyl/malonyl transferase activity) is an active-site residue. Residues 905-1034 (REVKASSTML…EQDLLESLSL (130 aa)) form an N-terminal hotdog fold region. The 302-residue stretch at 905–1206 (REVKASSTML…MAKMKIYVLK (302 aa)) folds into the PKS/mFAS DH domain. Positions 935 to 1203 (LLNHVMAGYT…DVRMAKMKIY (269 aa)) are product template (PT) domain. The interval 1050–1206 (STDVLRKELA…MAKMKIYVLK (157 aa)) is C-terminal hotdog fold. Ser1269 carries the post-translational modification O-(pantetheine 4'-phosphoryl)serine. One can recognise a Carrier domain in the interval 1331 to 1395 (ATSPSLPIMP…TSTEPSQTLV (65 aa)). The segment at 1334–1397 (PSLPIMPNGV…TEPSQTLVAN (64 aa)) is proline-rich linker region. Positions 1444–1529 (TVIGIHCPGL…PPGVVGLTAQ (86 aa)) are alpha/beta hydrolase superfamily-type thioesterase (TE) domain.

The enzyme catalyses holo-[ACP] + 8 malonyl-CoA + 8 H(+) = atrochrysone carboxyl-[ACP] + 8 CO2 + 8 CoA + 2 H2O. It functions in the pathway secondary metabolite biosynthesis. Functionally, non-reducing polyketide synthase that synthesizes the universal anthraquinone precursor atrochrysone carboxylic acid from malonyl-CoA. Produces a mixture of both 3R and 3S enantiomers with an excess of the 3S form. PKS4 catalyzes both hepta- and octaketide synthesis and also yields 6-hydroxymusizin, probably via carboxylating activity inherent to the KS domain. In Calonarius odorifer (Mushroom), this protein is Atrochrysone carboxylic acid synthase PKS4.